We begin with the raw amino-acid sequence, 57 residues long: Large ribosomal subunit protein bL32 (57 aa).

Basic residues predominate over residues 1–19 (MAVPKRRMSRANTRSRRAQ). Residues 1 to 20 (MAVPKRRMSRANTRSRRAQW) are disordered.

This sequence belongs to the bacterial ribosomal protein bL32 family.

This Mycobacterium avium (strain 104) protein is Large ribosomal subunit protein bL32.